A 341-amino-acid polypeptide reads, in one-letter code: Cytoplasmic tRNA 2-thiolation protein 1 (341 aa).

It belongs to the TtcA family. CTU1/NCS6/ATPBD3 subfamily.

It is found in the cytoplasm. Its pathway is tRNA modification; 5-methoxycarbonylmethyl-2-thiouridine-tRNA biosynthesis. Its function is as follows. Plays a central role in 2-thiolation of mcm(5)S(2)U at tRNA wobble positions of tRNA(Lys), tRNA(Glu) and tRNA(Gln). Directly binds tRNAs and probably acts by catalyzing adenylation of tRNAs, an intermediate required for 2-thiolation. It is unclear whether it acts as a sulfurtransferase that transfers sulfur from thiocarboxylated URM1 onto the uridine of tRNAs at wobble position. The protein is Cytoplasmic tRNA 2-thiolation protein 1 of Aedes aegypti (Yellowfever mosquito).